The following is a 131-amino-acid chain: Peptide methionine sulfoxide reductase MsrB (131 aa).

A MsrB domain is found at 9 to 131 (DEDWKKELTP…NSASLKFQKE (123 aa)). Residues Cys48, Cys51, Cys97, and Cys100 each coordinate Zn(2+). Cys120 serves as the catalytic Nucleophile.

It belongs to the MsrB Met sulfoxide reductase family. The cofactor is Zn(2+).

It carries out the reaction L-methionyl-[protein] + [thioredoxin]-disulfide + H2O = L-methionyl-(R)-S-oxide-[protein] + [thioredoxin]-dithiol. The chain is Peptide methionine sulfoxide reductase MsrB from Leptospira interrogans serogroup Icterohaemorrhagiae serovar Lai (strain 56601).